The chain runs to 796 residues: N-terminal acetyltransferase B complex subunit MDM20 (796 aa).

Position 2 is an N-acetylserine (serine 2).

The protein belongs to the MDM20/NAA25 family. Component of the N-terminal acetyltransferase B (NatB) complex, which is composed of NAT3 and MDM20.

The protein localises to the cytoplasm. Functionally, non-catalytic subunit of the NatB N-terminal acetyltransferase, which catalyzes acetylation of the amino-terminal methionine residues of all proteins beginning with Met-Asp or Met-Glu and of some proteins beginning with Met-Asn or Met-Met. NatB acetylates TPM1 protein and regulates tropomyocin-actin interactions. MDM20 is required for mitochondrial inheritance during budding and together with TPM1, is essential for the integrity and assembly of actin cables. Genetically interacts with CIN8. This Saccharomyces cerevisiae (strain ATCC 204508 / S288c) (Baker's yeast) protein is N-terminal acetyltransferase B complex subunit MDM20 (MDM20).